The following is a 79-amino-acid chain: Morintide mO1 (79 aa).

The N-terminal stretch at 1–20 (MAKLSFLSLFLLCLVATATA) is a signal peptide. The Chitin-binding type-1 domain occupies 21 to 63 (QNCGRQAGNRACANQLCCSQYGFCGSTSEYCSRANGCQSNCRG). Disulfide bonds link Cys-23–Cys-38, Cys-32–Cys-44, Cys-37–Cys-51, and Cys-57–Cys-61. Residues 64–79 (GGGADGAGGEAGGGGP) constitute a propeptide that is removed on maturation.

Leaves (at protein level).

Its function is as follows. Chitin-binding protein which functions in defense against chitin-containing fungal pathogens. Inhibits the growth of budding hyphae in A.alternata and A.brassiciola. The chain is Morintide mO1 from Moringa oleifera (Horseradish tree).